The following is a 474-amino-acid chain: Protein CyaE (474 aa).

A signal peptide spans 1–31; it reads MAAVQVRRRGRALALALWAGFALSVGGGVRA.

Belongs to the outer membrane factor (OMF) (TC 1.B.17) family.

It localises to the cell outer membrane. In terms of biological role, cyaE is necessary for transport of calmodulin-sensitive adenylate cyclase-hemolysin (cyclolysin). The chain is Protein CyaE (cyaE) from Bordetella pertussis (strain Tohama I / ATCC BAA-589 / NCTC 13251).